Consider the following 702-residue polypeptide: MIHTLETTVAGRKMKVDFGKTGMLSNAAIFMSYGDTVVMINANASKEPREGIDFFPLSVEYEERLYSVGKIPGGFIKREGKPSDKSILHARSIDRPLRPLFPKGYRNDVQIVNTVLSVEQDNLPEILAINGSSLALCLSSIPFTTPVAAVSVGLVDGEFIINPTVAQRENTILDLTVCATKERVMMVEAGGQEIDEETMYSAIMFGFEECKNIVAFQEEAVAKFGKTKNEPVLYKADEEVEKEVKSFAFDMIKEAMYIMDKDERNAQLDKVKEKISEEFSEKYEDKVADIAEVIYKTQKEIVRNMLLNEDRRPDGRAFDEVRPISCEVGILPRTHGTGLFTRGLTQVMTVATLGALGDVQILDGIAEEESKRYMHHYNFPSYSVGEVRPLRGPGRREIGHGALAERALEPLIPSQSEFPYTIRLVSEVLSSNGSTSQASVCGSTLALLDAGVPIKRPAAGIAMGLITSEDLEKEKVITDIQGIEDFFGDMDFKVAGTEKGITSIQFDTKIKGLSNSCVKDALEGAKKARLHILGKIKECIPEPRKELSKYAPRTEIICIDPEKIRDVIGAGGKVINKIIADTNVKIEIKEDGKIFVTSNNEPEGVKKAISIIEGLTKEVVQGEIYLGKVTKTTNFGAFVEILPGKEGLVHISKLDFARVEKVEDVVSVGDEILVKVTDIDNQGRINLSRKDAIAKKEEEKDK.

Residues aspartate 485 and aspartate 491 each coordinate Mg(2+). One can recognise a KH domain in the interval 552 to 612; the sequence is PRTEIICIDP…EGVKKAISII (61 aa). The 69-residue stretch at 622–690 folds into the S1 motif domain; the sequence is GEIYLGKVTK…NQGRINLSRK (69 aa).

The protein belongs to the polyribonucleotide nucleotidyltransferase family. Requires Mg(2+) as cofactor.

Its subcellular location is the cytoplasm. The catalysed reaction is RNA(n+1) + phosphate = RNA(n) + a ribonucleoside 5'-diphosphate. Its function is as follows. Involved in mRNA degradation. Catalyzes the phosphorolysis of single-stranded polyribonucleotides processively in the 3'- to 5'-direction. The chain is Polyribonucleotide nucleotidyltransferase from Clostridium botulinum (strain ATCC 19397 / Type A).